We begin with the raw amino-acid sequence, 704 residues long: Acetyl-coenzyme A synthetase 1 (704 aa).

CoA-binding positions include Arg239–Lys242 and Thr358. ATP is bound by residues Gly434–Pro436, Asp458–Thr463, Asp550, and Arg565. Ser573 contributes to the CoA binding site. Arg576 serves as a coordination point for ATP. CoA is bound at residue Arg641. A Microbody targeting signal motif is present at residues Val702–Leu704.

Belongs to the ATP-dependent AMP-binding enzyme family.

It localises to the microsome. Its subcellular location is the endoplasmic reticulum. It catalyses the reaction acetate + ATP + CoA = acetyl-CoA + AMP + diphosphate. This Candida glabrata (strain ATCC 2001 / BCRC 20586 / JCM 3761 / NBRC 0622 / NRRL Y-65 / CBS 138) (Yeast) protein is Acetyl-coenzyme A synthetase 1 (ACS1).